A 323-amino-acid chain; its full sequence is Glyoxylate/hydroxypyruvate reductase B (323 aa).

Residues Arg-237 and Glu-266 contribute to the active site. The active-site Proton donor is His-285.

The protein belongs to the D-isomer specific 2-hydroxyacid dehydrogenase family. GhrB subfamily. In terms of assembly, homodimer.

Its subcellular location is the cytoplasm. The enzyme catalyses glycolate + NADP(+) = glyoxylate + NADPH + H(+). The catalysed reaction is (R)-glycerate + NAD(+) = 3-hydroxypyruvate + NADH + H(+). It catalyses the reaction (R)-glycerate + NADP(+) = 3-hydroxypyruvate + NADPH + H(+). Catalyzes the NADPH-dependent reduction of glyoxylate and hydroxypyruvate into glycolate and glycerate, respectively. The protein is Glyoxylate/hydroxypyruvate reductase B of Klebsiella pneumoniae subsp. pneumoniae (strain ATCC 700721 / MGH 78578).